The primary structure comprises 185 residues: Large ribosomal subunit protein uL22 (185 aa).

The segment at 158–185 is disordered; the sequence is AKPREDEPHKKKISKKKLARAKEKMLRE. Over residues 167-176 the composition is skewed to basic residues; sequence KKKISKKKLA.

Belongs to the universal ribosomal protein uL22 family.

The sequence is that of Large ribosomal subunit protein uL22 (RpL17) from Diaphorina citri (Asian citrus psyllid).